A 124-amino-acid chain; its full sequence is Small ribosomal subunit protein uS12 (124 aa).

The segment at 1 to 25 (MPTINQLIRKPRKSQKEKTASPALQ) is disordered. 3-methylthioaspartic acid is present on D89.

The protein belongs to the universal ribosomal protein uS12 family. Part of the 30S ribosomal subunit. Contacts proteins S8 and S17. May interact with IF1 in the 30S initiation complex.

Its function is as follows. With S4 and S5 plays an important role in translational accuracy. Interacts with and stabilizes bases of the 16S rRNA that are involved in tRNA selection in the A site and with the mRNA backbone. Located at the interface of the 30S and 50S subunits, it traverses the body of the 30S subunit contacting proteins on the other side and probably holding the rRNA structure together. The combined cluster of proteins S8, S12 and S17 appears to hold together the shoulder and platform of the 30S subunit. The chain is Small ribosomal subunit protein uS12 from Borrelia turicatae (strain 91E135).